The following is a 294-amino-acid chain: MNRKITDKLATGMFGLCAAIIAAILVGLFSYIIINGVSQLSFQFITTKSSAIAAGGGIRDQLFNSFYILFITMLITIPLGVGGGVFMAEYAPNNKVTDFIRTCIEVLSSLPSIVIGMFGLLMFVNLTGWGYTIIGGALALTVFNLPVMVRVTEDAIRSVPKDLKEASLALGVSRWHTVKTVLIPSAIPSIITGAILASGRVFGEAAALLFTAGLTTPRLNFTEWNPFSETSPLNIFRPAETLAVHIWNVNTQGMIPDAEAIANGGSAVLVISVLVFNLAARWLGTMIYKKLTAN.

Transmembrane regions (helical) follow at residues 14 to 34, 66 to 86, 99 to 121, 126 to 148, 190 to 210, and 260 to 280; these read FGLC…YIII, FYIL…GGVF, FIRT…FGLL, LTGW…LPVM, IITG…ALLF, and AIAN…NLAA. Residues 62–280 form the ABC transmembrane type-1 domain; it reads LFNSFYILFI…ISVLVFNLAA (219 aa).

The protein belongs to the binding-protein-dependent transport system permease family. CysTW subfamily.

The protein localises to the cell membrane. In terms of biological role, part of the binding-protein-dependent transport system YqgGHIJK. Probably responsible for the translocation of the substrate across the membrane. This chain is Probable ABC transporter permease protein YqgI (yqgI), found in Bacillus subtilis (strain 168).